The following is a 313-amino-acid chain: Porphobilinogen deaminase (313 aa).

Residue cysteine 241 is modified to S-(dipyrrolylmethanemethyl)cysteine.

The protein belongs to the HMBS family. Monomer. The cofactor is dipyrromethane.

The enzyme catalyses 4 porphobilinogen + H2O = hydroxymethylbilane + 4 NH4(+). It functions in the pathway porphyrin-containing compound metabolism; protoporphyrin-IX biosynthesis; coproporphyrinogen-III from 5-aminolevulinate: step 2/4. In terms of biological role, tetrapolymerization of the monopyrrole PBG into the hydroxymethylbilane pre-uroporphyrinogen in several discrete steps. This Bacillus velezensis (strain DSM 23117 / BGSC 10A6 / LMG 26770 / FZB42) (Bacillus amyloliquefaciens subsp. plantarum) protein is Porphobilinogen deaminase.